The primary structure comprises 354 residues: S-adenosylmethionine:tRNA ribosyltransferase-isomerase (354 aa).

Belongs to the QueA family. As to quaternary structure, monomer.

The protein localises to the cytoplasm. The enzyme catalyses 7-aminomethyl-7-carbaguanosine(34) in tRNA + S-adenosyl-L-methionine = epoxyqueuosine(34) in tRNA + adenine + L-methionine + 2 H(+). Its pathway is tRNA modification; tRNA-queuosine biosynthesis. Transfers and isomerizes the ribose moiety from AdoMet to the 7-aminomethyl group of 7-deazaguanine (preQ1-tRNA) to give epoxyqueuosine (oQ-tRNA). The chain is S-adenosylmethionine:tRNA ribosyltransferase-isomerase from Dichelobacter nodosus (strain VCS1703A).